The sequence spans 152 residues: Nucleoside diphosphate kinase A (152 aa).

4 residues coordinate ATP: K12, F60, R88, and T94. K100 is covalently cross-linked (Glycyl lysine isopeptide (Lys-Gly) (interchain with G-Cter in ubiquitin)). Positions 105 and 115 each coordinate ATP. The active-site Pros-phosphohistidine intermediate is the H118. Phosphoserine is present on residues S120 and S122. The residue at position 124 (K124) is an N6-acetyllysine. S125 is subject to Phosphoserine.

Belongs to the NDK family. As to quaternary structure, hexamer of two different chains: An and B (A6, A5B, A4B2, A3B3, A2B4, AB5, B6). Interacts with PRUNE1. Component of the SET complex, composed of at least ANP32A, APEX1, HMGB2, NME1, SET and TREX1. Within this complex, interacts directly with SET. Also interacts with TREX1, but only following translocation to the nucleus. It depends on Mg(2+) as a cofactor.

The protein localises to the cytoplasm. The protein resides in the nucleus. It catalyses the reaction a 2'-deoxyribonucleoside 5'-diphosphate + ATP = a 2'-deoxyribonucleoside 5'-triphosphate + ADP. The catalysed reaction is a ribonucleoside 5'-diphosphate + ATP = a ribonucleoside 5'-triphosphate + ADP. Its activity is regulated as follows. Autophosphorylation at His-118 increases serine/threonine protein kinase activity of the enzyme. Interaction with the SET complex inhibits exonuclease activity. In terms of biological role, major role in the synthesis of nucleoside triphosphates other than ATP. The ATP gamma phosphate is transferred to the NDP beta phosphate via a ping-pong mechanism, using a phosphorylated active-site intermediate. Possesses nucleoside-diphosphate kinase, serine/threonine-specific protein kinase, geranyl and farnesyl pyrophosphate kinase, histidine protein kinase and 3'-5' exonuclease activities. Involved in cell proliferation, differentiation and development, signal transduction, G protein-coupled receptor endocytosis, and gene expression. Required for neural development including neural patterning and cell fate determination. During GZMA-mediated cell death, works in concert with TREX1. NME1 nicks one strand of DNA and TREX1 removes bases from the free 3' end to enhance DNA damage and prevent DNA end reannealing and rapid repair. The polypeptide is Nucleoside diphosphate kinase A (Nme1) (Mus musculus (Mouse)).